The chain runs to 456 residues: Cobyrinate a,c-diamide synthase (456 aa).

The GATase cobBQ-type domain occupies 247–439; sequence PIAIARDRAF…LHLHFGGKPW (193 aa). The active-site Nucleophile is C330.

This sequence belongs to the CobB/CbiA family. Mg(2+) is required as a cofactor.

The enzyme catalyses cob(II)yrinate + 2 L-glutamine + 2 ATP + 2 H2O = cob(II)yrinate a,c diamide + 2 L-glutamate + 2 ADP + 2 phosphate + 2 H(+). The protein operates within cofactor biosynthesis; adenosylcobalamin biosynthesis; cob(II)yrinate a,c-diamide from sirohydrochlorin (anaerobic route): step 10/10. Catalyzes the ATP-dependent amidation of the two carboxylate groups at positions a and c of cobyrinate, using either L-glutamine or ammonia as the nitrogen source. The protein is Cobyrinate a,c-diamide synthase of Synechococcus sp. (strain ATCC 27144 / PCC 6301 / SAUG 1402/1) (Anacystis nidulans).